A 1419-amino-acid polypeptide reads, in one-letter code: Agglutinin-like protein 5 (1419 aa).

The N-terminal stretch at 1–17 (MIQQFTLLFLYLSFATA) is a signal peptide. Cystine bridges form between Cys73/Cys150, Cys96/Cys112, Cys205/Cys298, and Cys227/Cys256. ALS repeat units lie at residues 365-396 (TTIT…VDVP), 401-432 (TTVT…VQVP), 438-469 (TTTT…VREP), 474-505 (VTTT…VREP), 510-541 (VTTT…VREP), 546-577 (VTTT…VKEP), 582-613 (VTTT…VREP), and 618-649 (VTTT…IHDP). Disordered stretches follow at residues 652–752 (ESSS…SSSS) and 864–885 (ASSF…SSDQ). Asn665 carries an N-linked (GlcNAc...) asparagine glycan. An N-linked (GlcNAc...) asparagine glycan is attached at Asn919. Disordered stretches follow at residues 926–966 (SESE…DSST), 981–1035 (TGMP…TKSS), 1051–1093 (TSTL…KESS), 1134–1177 (EDNE…TTDV), and 1211–1252 (ATSL…NRLS). 3 stretches are compositionally biased toward low complexity: residues 928-942 (SESS…ASES), 951-966 (SEST…DSST), and 993-1011 (TSDV…PTSA). A compositionally biased stretch (polar residues) spans 1012–1022 (EQSITDNPNID). Low complexity-rich tracts occupy residues 1023-1035 (SSQT…TKSS) and 1051-1078 (TSTL…GNIN). 2 stretches are compositionally biased toward polar residues: residues 1079 to 1093 (AGSS…KESS) and 1138 to 1160 (PNTF…SVLS). The span at 1212-1230 (TSLRSTSSSSNHATESSGT) shows a compositional bias: low complexity. Asn1301 and Asn1326 each carry an N-linked (GlcNAc...) asparagine glycan. The GPI-anchor amidated serine moiety is linked to residue Ser1398. Positions 1399-1419 (SATKHPSWLLKFISVALFFFL) are cleaved as a propeptide — removed in mature form.

It belongs to the ALS family. Forms homodimers through the tandem repeats. Aggregates in amyloid-like structures, with self-propagating secondary-structure changes, amyloid-characteristic dye binding, and induced birefringence. In terms of processing, N-glycosylated and O-glycosylated. Post-translationally, the GPI-anchor is attached to the protein in the endoplasmic reticulum and serves to target the protein to the cell surface. There, the glucosamine-inositol phospholipid moiety is cleaved off and the GPI-modified mannoprotein is covalently attached via its lipidless GPI glycan remnant to the 1,6-beta-glucan of the outer cell wall layer.

The protein localises to the cell membrane. It is found in the secreted. It localises to the cell wall. Cell surface adhesion protein which mediates both yeast-to-host tissue adherence and yeast aggregation. Plays an important role in the pathogenesis of C.albicans infections. Forms amyloid structures, essential for cell-cell association and cell-substrate adhesion to polystyrene. The sequence is that of Agglutinin-like protein 5 (ALS5) from Candida albicans (Yeast).